The following is a 277-amino-acid chain: MSSGIHVALVTGGNKGIGLAIVRDLCRLFSGDVVLTARDVTRGQAAVQQLQAEGLSPRFHQLDIDDLQSIRALRDFLRKEYGGLDVLVNNAGIAFKVADPTPFHIQAEVTMKTNFFGTRDVCTELLPLIKPQGRVVNVSSIMSVRALKSCSPELQQKFRSETITEEELVGLMNKFVEDTKKGVHQKEGWPSSAYGVTKIGVTVLSRIHARKLSEQRKGDKILLNACCPGWVRTDMAGPKATKSPEEGAETPVYLALLPPDAEGPHGQFVSEKRVEQW.

Serine 2 is modified (N-acetylserine). A phosphoserine mark is found at serine 2 and serine 30. NADP(+)-binding positions include 10 to 34 (VTGG…GDVV), 63 to 64 (DI), and asparagine 90. Residues 95–97 (FKV) and glutamine 106 contribute to the glutathione site. Serine 140 is a binding site for substrate. Residue 193 to 194 (AY) coordinates glutathione. The active-site Proton acceptor is tyrosine 194. NADP(+) is bound by residues 194–198 (YGVTK) and 231–233 (VRT). Lysine 239 carries the N6-1-carboxyethyl lysine modification.

This sequence belongs to the short-chain dehydrogenases/reductases (SDR) family. Monomer. As to expression, expressed in kidney (at protein level).

It localises to the cytoplasm. The catalysed reaction is a secondary alcohol + NADP(+) = a ketone + NADPH + H(+). The enzyme catalyses a primary alcohol + NADP(+) = an aldehyde + NADPH + H(+). It carries out the reaction prostaglandin F2alpha + NADP(+) = prostaglandin E2 + NADPH + H(+). It catalyses the reaction prostaglandin E1 + NADP(+) = 15-oxoprostaglandin E1 + NADPH + H(+). The catalysed reaction is menadione + NADPH + H(+) = menadiol + NADP(+). The enzyme catalyses prostaglandin D2 + NADP(+) = 15-oxoprostaglandin D2 + NADPH + H(+). It carries out the reaction prostaglandin E2 + NADP(+) = 15-oxoprostaglandin E2 + NADPH + H(+). It catalyses the reaction prostaglandin F2alpha + NADP(+) = 15-oxoprostaglandin F2alpha + NADPH + H(+). The catalysed reaction is daunorubicin + NADPH + H(+) = 13-dihydrodaunorubicin + NADP(+). The enzyme catalyses S-nitrosoglutathione + NADPH + H(+) = S-(hydroxysulfenamide)glutathione + NADP(+). It carries out the reaction cortisol + NADPH + H(+) = 20beta-dihydrocortisol + NADP(+). It catalyses the reaction corticosterone + NADPH + H(+) = 20beta-dihydrocorticosterone + NADP(+). Its activity is regulated as follows. Inhibited by quercetin, rutenin and its derivatives. In terms of biological role, NADPH-dependent reductase with broad substrate specificity. Catalyzes the reduction of a wide variety of carbonyl compounds including quinones, prostaglandins, menadione, plus various xenobiotics. Catalyzes the reduction of the antitumor anthracyclines doxorubicin and daunorubicin to the cardiotoxic compounds doxorubicinol and daunorubicinol. Can convert prostaglandin E to prostaglandin F2-alpha. Can bind glutathione, which explains its higher affinity for glutathione-conjugated substrates. Catalyzes the reduction of S-nitrosoglutathione. In addition, participates in the glucocorticoid metabolism by catalyzing the NADPH-dependent cortisol/corticosterone into 20beta-dihydrocortisol (20b-DHF) or 20beta-corticosterone (20b-DHB), which are weak agonists of NR3C1 and NR3C2 in adipose tissue. The chain is Carbonyl reductase [NADPH] 1 from Homo sapiens (Human).